The chain runs to 386 residues: Skeletal aspartic acid-rich protein 1 (386 aa).

The N-terminal stretch at 1 to 24 is a signal peptide; the sequence is MAFVSCFHLRLLFLCLALFMAAEC. Disordered stretches follow at residues 33-145 and 244-291; these read VDSD…PFSL and EVTD…DCPH. The segment covering 63-107 has biased composition (acidic residues); it reads YDASDDNDNDNDDDDNNDNDNDNDDDNDVDRDNDNDDDDFDDSND. Basic and acidic residues-rich tracts occupy residues 133-142 and 244-265; these read HSVESFEDRP and EVTD…KDTP. Positions 266 to 288 are enriched in acidic residues; it reads DTDSDPDDSSDNANDGDDDDDDD.

In terms of tissue distribution, component of the acid-insoluble and acid-soluble organic matrix of the aragonitic skeleton (at protein level).

It is found in the secreted. In Acropora millepora (Staghorn coral), this protein is Skeletal aspartic acid-rich protein 1.